The sequence spans 348 residues: D-erythrose-4-phosphate dehydrogenase (348 aa).

NAD(+) contacts are provided by residues 12 to 13 (RI) and R81. Residues 154–156 (SCT), R200, 213–214 (TK), and R236 contribute to the substrate site. C155 functions as the Nucleophile in the catalytic mechanism. An NAD(+)-binding site is contributed by N318.

Belongs to the glyceraldehyde-3-phosphate dehydrogenase family. Epd subfamily. As to quaternary structure, homotetramer.

It localises to the cytoplasm. The enzyme catalyses D-erythrose 4-phosphate + NAD(+) + H2O = 4-phospho-D-erythronate + NADH + 2 H(+). Its pathway is cofactor biosynthesis; pyridoxine 5'-phosphate biosynthesis; pyridoxine 5'-phosphate from D-erythrose 4-phosphate: step 1/5. Catalyzes the NAD-dependent conversion of D-erythrose 4-phosphate to 4-phosphoerythronate. In Salmonella agona (strain SL483), this protein is D-erythrose-4-phosphate dehydrogenase.